We begin with the raw amino-acid sequence, 1784 residues long: Histone acetyltransferase KAT6B (1784 aa).

The region spanning 1–77 (MVKLANPLYT…LASYKDPDNP (77 aa)) is the SAMD1-like winged helix (WH) domain. The tract at residues 72 to 98 (KDPDNPGRFSSVKPGTFPKSTKESRGS) is disordered. The region spanning 103 to 176 (RNVDWNKLLR…KDGPQYRVNY (74 aa)) is the H15 domain. 2 PHD-type zinc fingers span residues 213 to 272 (IPIC…CKTC) and 269 to 320 (CKTC…CRPK). A Phosphoserine modification is found at serine 355. Residues 361–425 (GSMNAFTGRG…ECESGVEDCG (65 aa)) are negatively regulates HAT activity. A Glycyl lysine isopeptide (Lys-Gly) (interchain with G-Cter in SUMO2) cross-link involves residue lysine 381. Residues 423 to 697 (DCGRYPSVIE…LDPDSLRWTP (275 aa)) form the MYST-type HAT domain. Positions 426–716 (RYPSVIEFGK…EEEREAEKEA (291 aa)) are catalytic. The C2HC MYST-type zinc finger occupies 456–481 (LYLCEFCLKYMKSKNILLRHSKKCGW). The interaction with BRPF1 stretch occupies residues 460–716 (EFCLKYMKSK…EEEREAEKEA (257 aa)). Position 523 is an N6-acetyllysine; by autocatalysis (lysine 523). Acetyl-CoA contacts are provided by residues 564–568 (SCIMI) and 573–579 (QRQGFGR). The active-site Proton donor/acceptor is glutamate 599. Serine 603 provides a ligand contact to acetyl-CoA. Disordered stretches follow at residues 730-884 (EQEV…RPMP), 904-1163 (RKAF…FKEV), 1195-1273 (SCNS…FQDC), and 1291-1330 (QSPQIATTLDDCQQSDHSSPVSSVHSHPGQSVRSVNSPSV). Polar residues predominate over residues 733 to 751 (VLSTRANSRQSPAKVQSKN). N6-acetyllysine is present on residues lysine 746, lysine 750, and lysine 752. The residue at position 756 (serine 756) is a Phosphoserine. The span at 777-819 (SEEEEEEEEDEEEEDEEEEEEEEEDEEEEEEEEEEEEEEEEEN) shows a compositional bias: acidic residues. A compositionally biased stretch (polar residues) spans 820–831 (IQSSPPRLTKPQ). Over residues 835–854 (IKRKRPFVLKKKRGRKRRRI) the composition is skewed to basic residues. The segment covering 856–869 (SSVTTETISETTEV) has biased composition (low complexity). A compositionally biased stretch (basic residues) spans 904 to 914 (RKAFQHQPGKK). Composition is skewed to basic and acidic residues over residues 938 to 957 (MNDDSRNLKEGSKDNPEPLK) and 1055 to 1064 (EKPEDDLIKP). Residues 1065–1087 (EEEEEEEEEEEEEEGEEEEEEGG) show a composition bias toward acidic residues. Basic and acidic residues-rich tracts occupy residues 1088 to 1101 (NVEKDPDGAKSQEK) and 1107 to 1118 (SPEKEDSARLDD). Residues 1119 to 1128 (HEEEEEEDEE) show a composition bias toward acidic residues. Basic and acidic residues predominate over residues 1144-1163 (HMESAEVEKEELPRESFKEV). The span at 1209–1218 (AVPESDEEPP) shows a compositional bias: acidic residues. Residues 1224–1240 (QKQDQKNSKEVDTEFKE) show a composition bias toward basic and acidic residues. Polar residues-rich tracts occupy residues 1251 to 1263 (ETVQAVQSLTQES) and 1291 to 1302 (QSPQIATTLDDC). The interval 1271 to 1784 (QDCAETQEAC…QSLNGSYMRR (514 aa)) is interaction with RUNX1 and RUNX2. Residues 1305-1322 (SDHSSPVSSVHSHPGQSV) show a composition bias toward low complexity.

Belongs to the MYST (SAS/MOZ) family. In terms of assembly, component of the MOZ/MORF complex composed at least of ING5, KAT6A, KAT6B, MEAF6 and one of BRPF1, BRD1/BRPF2 and BRPF3. Interacts with RUNX1 and RUNX2. Post-translationally, autoacetylation at Lys-523 is required for proper function.

It localises to the nucleus. The catalysed reaction is L-lysyl-[protein] + acetyl-CoA = N(6)-acetyl-L-lysyl-[protein] + CoA + H(+). Its function is as follows. Histone acetyltransferase which may be involved in both positive and negative regulation of transcription. Required for RUNX2-dependent transcriptional activation. May be involved in cerebral cortex development. Component of the MOZ/MORF complex which has a histone H3 acetyltransferase activity. This Macaca fascicularis (Crab-eating macaque) protein is Histone acetyltransferase KAT6B (KAT6B).